The following is a 92-amino-acid chain: Acyl carrier protein (92 aa).

Residues 1–84 (MPSTADERQL…QIAAHLAEAV (84 aa)) form the Carrier domain. O-(pantetheine 4'-phosphoryl)serine is present on S44.

This sequence belongs to the acyl carrier protein (ACP) family. Post-translationally, 4'-phosphopantetheine is transferred from CoA to a specific serine of apo-ACP by AcpS. This modification is essential for activity because fatty acids are bound in thioester linkage to the sulfhydryl of the prosthetic group.

The protein resides in the cytoplasm. The protein operates within lipid metabolism; fatty acid biosynthesis. Functionally, carrier of the growing fatty acid chain in fatty acid biosynthesis. The sequence is that of Acyl carrier protein from Streptomyces coelicolor (strain ATCC BAA-471 / A3(2) / M145).